The primary structure comprises 189 residues: Ribosome maturation factor RimM (189 aa).

A PRC barrel domain is found at 96–169; it reads EDEFYYADLE…TLLIDPLAAG (74 aa).

It belongs to the RimM family. As to quaternary structure, binds ribosomal protein uS19.

The protein resides in the cytoplasm. An accessory protein needed during the final step in the assembly of 30S ribosomal subunit, possibly for assembly of the head region. Essential for efficient processing of 16S rRNA. May be needed both before and after RbfA during the maturation of 16S rRNA. It has affinity for free ribosomal 30S subunits but not for 70S ribosomes. The sequence is that of Ribosome maturation factor RimM from Rhizobium johnstonii (strain DSM 114642 / LMG 32736 / 3841) (Rhizobium leguminosarum bv. viciae).